The following is a 79-amino-acid chain: Acyl carrier protein (79 aa).

A Carrier domain is found at 1 to 76 (MEVFEEVRDV…DVVTYIENLN (76 aa)). At serine 36 the chain carries O-(pantetheine 4'-phosphoryl)serine.

It belongs to the acyl carrier protein (ACP) family. 4'-phosphopantetheine is transferred from CoA to a specific serine of apo-ACP by AcpS. This modification is essential for activity because fatty acids are bound in thioester linkage to the sulfhydryl of the prosthetic group.

It localises to the cytoplasm. It functions in the pathway lipid metabolism; fatty acid biosynthesis. In terms of biological role, carrier of the growing fatty acid chain in fatty acid biosynthesis. The polypeptide is Acyl carrier protein (Campylobacter hominis (strain ATCC BAA-381 / DSM 21671 / CCUG 45161 / LMG 19568 / NCTC 13146 / CH001A)).